The sequence spans 208 residues: MGVTVVSHPLVQHKLTIMRKKETSTASFQRLLKEISLLLCYEVTRNLELTTMSIETPLMPMEAPVLEGKKLVFASILRAGNGLLEGMLDLVPAARVAHIGLYRDHDTLQPIEYYFKAPEDIVNRLVIVVDPMLATANSAIAAIDKLKERGATNIRFLCLLAAPEGIERFTKAHPDVEVFTASIDERLDEKGYIVPGLGDAGDRMYGTK.

5-phospho-alpha-D-ribose 1-diphosphate is bound by residues arginine 78, arginine 103, and 130–138 (DPMLATANS). Uracil-binding positions include isoleucine 193 and 198 to 200 (GDA). A 5-phospho-alpha-D-ribose 1-diphosphate-binding site is contributed by aspartate 199.

Belongs to the UPRTase family. Requires Mg(2+) as cofactor.

The catalysed reaction is UMP + diphosphate = 5-phospho-alpha-D-ribose 1-diphosphate + uracil. It participates in pyrimidine metabolism; UMP biosynthesis via salvage pathway; UMP from uracil: step 1/1. Allosterically activated by GTP. Its function is as follows. Catalyzes the conversion of uracil and 5-phospho-alpha-D-ribose 1-diphosphate (PRPP) to UMP and diphosphate. This is Uracil phosphoribosyltransferase from Brucella canis (strain ATCC 23365 / NCTC 10854 / RM-666).